We begin with the raw amino-acid sequence, 157 residues long: Probable succinate transporter subunit YjjB (157 aa).

Helical transmembrane passes span 8-28 (LALM…AMVF), 55-75 (AGFN…SIGI), 87-107 (VFTV…TAMI), and 129-149 (FLKA…PGLW).

This sequence belongs to the ThrE exporter (TC 2.A.79) family. As to quaternary structure, the transporter is composed of YjjB and YjjP.

It localises to the cell inner membrane. Functionally, involved in succinate export with YjjP. Both proteins are required for export. The sequence is that of Probable succinate transporter subunit YjjB from Salmonella agona (strain SL483).